The primary structure comprises 818 residues: Cytosolic phospholipase A2 delta (818 aa).

The region spanning 5–124 (SPGGPPGHPY…LPGKLLRKTF (120 aa)) is the C2 domain. Ca(2+) is bound by residues D38, D44, D94, D96, and D102. The 546-residue stretch at 273 to 818 (GCPEELAVHL…LEARPPRAQT (546 aa)) folds into the PLA2c domain. 330–331 (GG) provides a ligand contact to substrate. S361 acts as the Nucleophile in catalysis. D647 (proton acceptor) is an active-site residue.

Ca(2+) serves as cofactor. In terms of tissue distribution, expressed in stratified squamous epithelia, such as those in skin and cervix, but not in other tissues. Strongly expressed in the upper spinous layer of the psoriatic epidermis, expressed weakly and discontinuously in atopic dermatitis and mycosis fungoides, and not detected in the epidermis of normal skin.

The protein localises to the cytoplasm. It localises to the cytosol. Its subcellular location is the membrane. The catalysed reaction is a 1,2-diacyl-sn-glycero-3-phosphocholine + H2O = a 1-acyl-sn-glycero-3-phosphocholine + a fatty acid + H(+). It carries out the reaction 1-hexadecanoyl-2-(5Z,8Z,11Z,14Z-eicosatetraenoyl)-sn-glycero-3-phosphocholine + H2O = 1-hexadecanoyl-sn-glycero-3-phosphocholine + (5Z,8Z,11Z,14Z)-eicosatetraenoate + H(+). The enzyme catalyses 1-hexadecanoyl-2-(9Z,12Z-octadecadienoyl)-sn-glycero-3-phosphocholine + H2O = (9Z,12Z)-octadecadienoate + 1-hexadecanoyl-sn-glycero-3-phosphocholine + H(+). It catalyses the reaction 1-hexadecanoyl-2-(9Z-octadecenoyl)-sn-glycero-3-phosphocholine + H2O = 1-hexadecanoyl-sn-glycero-3-phosphocholine + (9Z)-octadecenoate + H(+). The catalysed reaction is 1-hexadecanoyl-2-(5Z,8Z,11Z,14Z-eicosatetraenoyl)-sn-glycero-3-phosphoethanolamine + H2O = 1-hexadecanoyl-sn-glycero-3-phosphoethanolamine + (5Z,8Z,11Z,14Z)-eicosatetraenoate + H(+). It carries out the reaction 1-hexadecanoyl-2-(9Z,12Z-octadecadienoyl)-sn-glycero-3-phosphoethanolamine + H2O = 1-hexadecanoyl-sn-glycero-3-phosphoethanolamine + (9Z,12Z)-octadecadienoate + H(+). Its pathway is lipid metabolism; fatty acid metabolism. Stimulated by cytosolic Ca(2+). Its function is as follows. Calcium-dependent phospholipase A2 that selectively hydrolyzes glycerophospholipids in the sn-2 position. Has a preference for linoleic acid at the sn-2 position. The protein is Cytosolic phospholipase A2 delta of Homo sapiens (Human).